The sequence spans 839 residues: Putative AC9 transposase (839 aa).

Polar residues predominate over residues 32–43 (SSSNANGTATDP). The interval 32-85 (SSSNANGTATDPSQDDMAIVHEPQPQPQPQPEPQPQPQPEPEEEAPQKRAKKCT) is disordered. Positions 55–70 (QPQPQPQPEPQPQPQP) are enriched in pro residues.

This chain is Putative AC9 transposase, found in Zea mays (Maize).